Consider the following 337-residue polypeptide: 2-oxoglutarate-dependent dioxygenase 19 (337 aa).

The interval 1 to 25 (MVAPSRLPSHEEQSAAAAADGSATP) is disordered. Residues 179 to 283 (NLESCFQILV…RMSFVSLIGP (105 aa)) form the Fe2OG dioxygenase domain. Fe cation is bound by residues His208, Asp210, and His264. Arg274 contributes to the 2-oxoglutarate binding site.

It belongs to the iron/ascorbate-dependent oxidoreductase family. Requires Fe(2+) as cofactor. The cofactor is L-ascorbate. Expressed in shoots.

It is found in the cytoplasm. It catalyses the reaction melatonin + 2-oxoglutarate + O2 = 2-hydroxymelatonin + succinate + CO2. In terms of biological role, involved in melatonin degradation. Catalyzes the hydroxylation of melatonin to produce 2-hydroxymelatonin. This is 2-oxoglutarate-dependent dioxygenase 19 from Oryza sativa subsp. japonica (Rice).